Here is a 264-residue protein sequence, read N- to C-terminus: MNILPKKSWHVRNKDNVARVRRDEAQAREEEKERERRVLLAQQEARTEFLRKKARHQNSLPELEAAEAGAPGSGPVDLFRELLEEGKGVIRGNKEYKEEKRQEKERQEKALGILTYLGQSAAEAQTQPPWYQLPPGRGGPPPGPAPDEKIKSRLDPLREMQKHLGKKRQHGGDEGSRSRKEKEGSEKQRPKEPPSLDQLRAERLRREAAERSRAEALLARVQGRALQEGQPEEDETDDRRRRYNSQFNPQLARRPRQQDPHLTH.

Disordered regions lie at residues 1–37 and 49–76; these read MNILPKKSWHVRNKDNVARVRRDEAQAREEEKERERR and FLRKKARHQNSLPELEAAEAGAPGSGPV. Positions 12 to 37 are enriched in basic and acidic residues; sequence RNKDNVARVRRDEAQAREEEKERERR. The stretch at 16-46 forms a coiled coil; it reads NVARVRRDEAQAREEEKERERRVLLAQQEAR. At serine 59 the chain carries Phosphoserine. The segment covering 59–75 has biased composition (low complexity); that stretch reads SLPELEAAEAGAPGSGP. Positions 89 to 115 form a coiled coil; that stretch reads VIRGNKEYKEEKRQEKERQEKALGILT. The interval 118–264 is disordered; that stretch reads GQSAAEAQTQ…PRQQDPHLTH (147 aa). Composition is skewed to basic and acidic residues over residues 146–162 and 170–214; these read PDEKIKSRLDPLREMQK and HGGD…RSRA. Residues 196-222 are a coiled coil; it reads LDQLRAERLRREAAERSRAEALLARVQ. Residue serine 245 is modified to Phosphoserine.

In Homo sapiens (Human), this protein is Leukocyte receptor cluster member 1 (LENG1).